Here is a 310-residue protein sequence, read N- to C-terminus: Peroxidase 44 (310 aa).

The N-terminal stretch at Met1 to Ala20 is a signal peptide. 4 cysteine pairs are disulfide-bonded: Cys31–Cys110, Cys64–Cys69, Cys116–Cys305, and Cys194–Cys218. His62 serves as the catalytic Proton acceptor. The Ca(2+) site is built by Asp63, Val66, Gly68, Asp70, and Ser72. Pro156 contributes to the substrate binding site. Heme b is bound at residue His187. Residue Ser188 participates in Ca(2+) binding. Asp229, Thr232, and Asp237 together coordinate Ca(2+).

Belongs to the peroxidase family. Classical plant (class III) peroxidase subfamily. Heme b is required as a cofactor. It depends on Ca(2+) as a cofactor.

It is found in the secreted. It carries out the reaction 2 a phenolic donor + H2O2 = 2 a phenolic radical donor + 2 H2O. Removal of H(2)O(2), oxidation of toxic reductants, biosynthesis and degradation of lignin, suberization, auxin catabolism, response to environmental stresses such as wounding, pathogen attack and oxidative stress. These functions might be dependent on each isozyme/isoform in each plant tissue. The chain is Peroxidase 44 (PER44) from Arabidopsis thaliana (Mouse-ear cress).